Here is a 281-residue protein sequence, read N- to C-terminus: Transcription factor lfc1 (281 aa).

Positions 60–87 (CLTCRMKKIKCDETKPTCARCTHGQREC) form a DNA-binding region, zn(2)-C6 fungal-type.

The protein resides in the nucleus. Transcription factor that acts as a negative regulator of basidioma development via repressing the expression of genes involved in basidioma development, including hydrophobins such as Hyd-1 and Hyd-8, lectins such as JRL1, as well as the fruiting body differentiation gene FVFD16. The chain is Transcription factor lfc1 from Flammulina velutipes (Agaricus velutipes).